Consider the following 827-residue polypeptide: Probable beta-glucosidase H (827 aa).

Residue D223 is part of the active site. One can recognise a PA14 domain in the interval 387–546 (RLLTNAVMHF…DSAEMVRSAV (160 aa)). Residues N471, N594, N600, and N625 are each glycosylated (N-linked (GlcNAc...) asparagine).

Belongs to the glycosyl hydrolase 3 family.

The protein resides in the secreted. It catalyses the reaction Hydrolysis of terminal, non-reducing beta-D-glucosyl residues with release of beta-D-glucose.. Its pathway is glycan metabolism; cellulose degradation. Functionally, beta-glucosidases are one of a number of cellulolytic enzymes involved in the degradation of cellulosic biomass. Catalyzes the last step releasing glucose from the inhibitory cellobiose. In Aspergillus flavus (strain ATCC 200026 / FGSC A1120 / IAM 13836 / NRRL 3357 / JCM 12722 / SRRC 167), this protein is Probable beta-glucosidase H (bglH).